Consider the following 142-residue polypeptide: Hemoglobin subunit theta-1 (142 aa).

Positions 2–142 (ALSAEDRALV…VISALVSEYR (141 aa)) constitute a Globin domain. Heme b-binding residues include H59 and H88.

The protein belongs to the globin family.

The sequence is that of Hemoglobin subunit theta-1 (HBQ1) from Homo sapiens (Human).